We begin with the raw amino-acid sequence, 551 residues long: MKLYDNGVAVLGCGNLGNAIAKGLVASKQFKSNQIVLTKRNLSTIEPLKREGYHVTTSNHDAVSRCKIVIVCVVPAQLDDLLDSIKQSVTENHIIISVVSGASIEDIRSHLEKDVPIVRAMPNTAIQHCQSMTCLAIRSSHQKSTNSPSDKAKDNALEVAKKIFNCLGMSIVLSEEQIVPATALCACGIAFFCRAIRAAAQGGCEIGFHAEDAIRIAAQTAKGAATLLLENNFHPEYEIDKVTTPQGCTIAGLNQMEHAGFSSAMIKGIVTSSDKAASLYTQKQQNKKQQQLKQQQHQQHQHQQHQQHQQQVQQQEPHQYQQQQQQSHQQSQYNQGHNYGHQNQHHHNHDDQHQNYYNQDQKRRNNRKHRSNENYDNHHHHNQQYQQHQQPTQQESQEQTQQPEQTQSTNQSNQRRNSESRNGKSPQKQPQKQSQVQQPSSTTENTDQQQQQQPPQEQQQQQEQPQQPQEQQQQPNVVDEAERPKEQQQQPQQQQQTIDKKGYNNNRRGGRHYSYNNNYNSHHHRHNGINKNSSSMYHDEKRHEVKTEQIN.

The tract at residues 279–551 (LYTQKQQNKK…RHEVKTEQIN (273 aa)) is disordered. 7 stretches are compositionally biased toward low complexity: residues 282 to 298 (QKQQ…QQHQ), 306 to 342 (QQHQ…YGHQ), 383 to 415 (QQYQ…SNQR), 424 to 441 (KSPQ…QPSS), 448 to 475 (QQQQ…QQQP), 487 to 496 (QQQQPQQQQQ), and 503 to 520 (YNNN…NNYN). Positions 537 to 551 (YHDEKRHEVKTEQIN) are enriched in basic and acidic residues.

Belongs to the pyrroline-5-carboxylate reductase family. In terms of assembly, homodecamer; composed of 5 homodimers.

It carries out the reaction L-proline + NADP(+) = (S)-1-pyrroline-5-carboxylate + NADPH + 2 H(+). The enzyme catalyses L-proline + NAD(+) = (S)-1-pyrroline-5-carboxylate + NADH + 2 H(+). Its pathway is amino-acid biosynthesis; L-proline biosynthesis; L-proline from L-glutamate 5-semialdehyde: step 1/1. This chain is Pyrroline-5-carboxylate reductase 1 (pycr1), found in Dictyostelium discoideum (Social amoeba).